The following is a 30-amino-acid chain: Rothein 3.3 (30 aa).

Leucine 30 carries the leucine amide modification.

Expressed by the skin dorsal glands.

The protein resides in the secreted. Its function is as follows. Lacks antimicrobial activity. Does not inhibit the formation of NO by neuronal nitric oxide. This chain is Rothein 3.3, found in Litoria rothii (Roth's tree frog).